The sequence spans 689 residues: DNA ligase (689 aa).

NAD(+) contacts are provided by residues 40–44 (DAEYD), 89–90 (SL), and E121. The active-site N6-AMP-lysine intermediate is the K123. Residues R144, E179, K295, and K319 each coordinate NAD(+). Residues C413, C416, C431, and C437 each contribute to the Zn(2+) site. In terms of domain architecture, BRCT spans 610–689 (RAQSSLTGKI…EEWLTLIKNA (80 aa)).

This sequence belongs to the NAD-dependent DNA ligase family. LigA subfamily. The cofactor is Mg(2+). It depends on Mn(2+) as a cofactor.

It catalyses the reaction NAD(+) + (deoxyribonucleotide)n-3'-hydroxyl + 5'-phospho-(deoxyribonucleotide)m = (deoxyribonucleotide)n+m + AMP + beta-nicotinamide D-nucleotide.. Functionally, DNA ligase that catalyzes the formation of phosphodiester linkages between 5'-phosphoryl and 3'-hydroxyl groups in double-stranded DNA using NAD as a coenzyme and as the energy source for the reaction. It is essential for DNA replication and repair of damaged DNA. This chain is DNA ligase, found in Rickettsia akari (strain Hartford).